The sequence spans 346 residues: E3 ubiquitin-protein ligase MARCHF9 (346 aa).

2 disordered regions span residues 20-39 and 47-92; these read GGGRPRAEPQPRGGRGGGCG and STRD…PGAL. Residues 63-75 are compositionally biased toward basic and acidic residues; the sequence is PRARGLAGDKEPR. Residues 77-90 show a composition bias toward pro residues; the sequence is GPLPPPAPPLPPPG. An RING-CH-type zinc finger spans residues 102–162; it reads DSGLRTPQCR…ELCYFKYQVL (61 aa). Positions 110, 113, 126, 128, 136, 139, 152, and 155 each coordinate Zn(2+). 2 helical membrane passes run 185–205 and 219–239; these read IAAIVLGSLFLVASISWLIWS and LFQICYGMYGFMDVVCIGLII. 2 disordered regions span residues 273–301 and 326–346; these read DAGGGTAGKSGPRNSRTGPTSGATSRPPA and PPDARSSSHSGREVVMRVTTV. The segment covering 284-296 has biased composition (polar residues); sequence PRNSRTGPTSGAT.

Homodimer. Ubiquitously expressed.

The protein resides in the golgi apparatus membrane. Its subcellular location is the lysosome membrane. It carries out the reaction S-ubiquitinyl-[E2 ubiquitin-conjugating enzyme]-L-cysteine + [acceptor protein]-L-lysine = [E2 ubiquitin-conjugating enzyme]-L-cysteine + N(6)-ubiquitinyl-[acceptor protein]-L-lysine.. Its pathway is protein modification; protein ubiquitination. In terms of biological role, E3 ubiquitin-protein ligase that may mediate ubiquitination of MHC-I, CD4 and ICAM1, and promote their subsequent endocytosis and sorting to lysosomes via multivesicular bodies. E3 ubiquitin ligases accept ubiquitin from an E2 ubiquitin-conjugating enzyme in the form of a thioester and then directly transfer the ubiquitin to targeted substrates. The sequence is that of E3 ubiquitin-protein ligase MARCHF9 from Homo sapiens (Human).